Here is a 123-residue protein sequence, read N- to C-terminus: Large ribosomal subunit protein uL29 (123 aa).

Lys-19 bears the N6-acetyllysine mark. Lys-25 is covalently cross-linked (Glycyl lysine isopeptide (Lys-Gly) (interchain with G-Cter in SUMO2)). Position 29 is a phosphoserine (Ser-29). Lys-43 carries the N6-acetyllysine modification.

The protein belongs to the universal ribosomal protein uL29 family. As to quaternary structure, component of the large ribosomal subunit.

Its subcellular location is the cytoplasm. Component of the large ribosomal subunit. The ribosome is a large ribonucleoprotein complex responsible for the synthesis of proteins in the cell. The protein is Large ribosomal subunit protein uL29 (RPL35) of Sus scrofa (Pig).